Consider the following 952-residue polypeptide: Isoleucine--tRNA ligase (952 aa).

Positions 60 to 70 match the 'HIGH' region motif; it reads PYANGSLHIGH. Glutamate 562 is a binding site for L-isoleucyl-5'-AMP. Residues 603 to 607 carry the 'KMSKS' region motif; the sequence is KMSKS. Lysine 606 is an ATP binding site. Zn(2+) is bound by residues cysteine 921, cysteine 924, cysteine 941, and cysteine 944.

This sequence belongs to the class-I aminoacyl-tRNA synthetase family. IleS type 1 subfamily. As to quaternary structure, monomer. The cofactor is Zn(2+).

It is found in the cytoplasm. The enzyme catalyses tRNA(Ile) + L-isoleucine + ATP = L-isoleucyl-tRNA(Ile) + AMP + diphosphate. Functionally, catalyzes the attachment of isoleucine to tRNA(Ile). As IleRS can inadvertently accommodate and process structurally similar amino acids such as valine, to avoid such errors it has two additional distinct tRNA(Ile)-dependent editing activities. One activity is designated as 'pretransfer' editing and involves the hydrolysis of activated Val-AMP. The other activity is designated 'posttransfer' editing and involves deacylation of mischarged Val-tRNA(Ile). This is Isoleucine--tRNA ligase from Microcystis aeruginosa (strain NIES-843 / IAM M-2473).